Reading from the N-terminus, the 1048-residue chain is Histone deacetylase complex subunit SAP130 (1048 aa).

The interval 1–95 (MGPPRHPQAG…LQSREEKQEP (95 aa)) is disordered. Over residues 40–54 (TGLSQAPSQIANSGS) the composition is skewed to polar residues. Residues 67 to 80 (ESGRDSEVSAREHM) show a composition bias toward basic and acidic residues. An Omega-N-methylarginine modification is found at R232. At T355 the chain carries Phosphothreonine. S442 and S465 each carry phosphoserine. Disordered stretches follow at residues 458-477 (PISG…RSDN), 576-617 (IGTP…PEGK), and 649-687 (QTHS…SEIH). Composition is skewed to polar residues over residues 590-613 (GIHS…QQPQ) and 649-667 (QTHS…SSPR). Residue K785 forms a Glycyl lysine isopeptide (Lys-Gly) (interchain with G-Cter in SUMO2) linkage. The segment at 819-871 (LSMPTSDLPPGASPRKKPRKQQHVISTEEGDMMETNSTDDEKSTAKSLLVKAE) is disordered. The tract at residues 836-1047 (PRKQQHVIST…KVSKLKRKEK (212 aa)) is interactions with SIN3A and HDAC1. S855 is subject to Phosphoserine. T856 is modified (phosphothreonine). Glycyl lysine isopeptide (Lys-Gly) (interchain with G-Cter in SUMO2) cross-links involve residues K864 and K869. Phosphoserine is present on S875.

It belongs to the SAP130 family. As to quaternary structure, component of a mSin3A corepressor complex that contains SIN3A, SAP130, SUDS3/SAP45, ARID4B/SAP180, HDAC1 and HDAC2. Interacts (released by dead or dying cells) with CLEC4E. Post-translationally, acetylated. Sumoylated with SUMO1. In terms of tissue distribution, expressed in various cancer cell ines.

It is found in the nucleus. Acts as a transcriptional repressor. May function in the assembly and/or enzymatic activity of the mSin3A corepressor complex or in mediating interactions between the complex and other regulatory complexes. This Homo sapiens (Human) protein is Histone deacetylase complex subunit SAP130 (SAP130).